Here is a 452-residue protein sequence, read N- to C-terminus: Phosphatidylserine synthase 2 (452 aa).

At 1 to 35 (MAKGEWKRSGADDLPLPGRSECEVFDDGTNTFFWR) the chain is on the cytoplasmic side. A helical membrane pass occupies residues 36 to 56 (AHTVTVLFILTCALVYVTLLE). Residues 57-69 (ETPHDTAYNTKRG) lie on the Lumenal side of the membrane. Residues 70 to 90 (IVASILVFLCFGVTQAKDGPF) traverse the membrane as a helical segment. The Cytoplasmic segment spans residues 91 to 99 (TRPHPAYWR). Residues 100-120 (FWLCVSVVYELFLIFILFQTV) traverse the membrane as a helical segment. The Lumenal segment spans residues 121–286 (HDGRQFMKYI…EWRPASNLRR (166 aa)). The helical transmembrane segment at 287–307 (WLAVLGIIFMFLLAELNTFYL) threads the bilayer. Residue Lys-308 is a topological domain, cytoplasmic. A helical transmembrane segment spans residues 309-329 (FVMWMPPEHYLVLFRLVFFVN). At 330 to 349 (VGGVAMREIYDFMDDPKFHK) the chain is on the lumenal side. A helical transmembrane segment spans residues 350–370 (KLGQQAWIVAAITVTEFLIVV). Topologically, residues 371 to 376 (KYDPNT) are cytoplasmic. Residues 377-397 (IMLPIPFFITQCWILGIALIL) traverse the membrane as a helical segment. Over 398-452 (VWTLWRFFIRDITLRYKETRRRRQEVSSERDGSSSAPSGRSKLNGSMDSVRHRKS) the chain is Lumenal. The disordered stretch occupies residues 419–452 (RRQEVSSERDGSSSAPSGRSKLNGSMDSVRHRKS). A compositionally biased stretch (polar residues) spans 430–444 (SSSAPSGRSKLNGSM).

It belongs to the phosphatidyl serine synthase family.

Its subcellular location is the endoplasmic reticulum membrane. It carries out the reaction a 1,2-diacyl-sn-glycero-3-phosphoethanolamine + L-serine = a 1,2-diacyl-sn-glycero-3-phospho-L-serine + ethanolamine. The enzyme catalyses 1-hexadecanoyl-2-(9Z-octadecenoyl)-sn-glycero-3-phosphoethanolamine + L-serine = 1-hexadecanoyl-2-(9Z-octadecenoyl)-sn-glycero-3-phospho-L-serine + ethanolamine. The catalysed reaction is 1-hexadecanoyl-2-(4Z,7Z,10Z,13Z,16Z,19Z-docosahexaenoyl)-sn-glycero-3-phosphoethanolamine + L-serine = 1-hexadecanoyl-2-(4Z,7Z,10Z,13Z,16Z,19Z-docosahexaenoyl)-sn-glycero-3-phosphoserine + ethanolamine. It catalyses the reaction 1-octadecanoyl-2-(5Z,8Z,11Z,14Z)-eicosatetraenoyl-sn-glycero-3-phosphoethanolamine + L-serine = 1-octadecanoyl-2-(5Z,8Z,11Z,14Z)-eicosatetraenoyl-sn-glycero-3-phosphoserine + ethanolamine. It carries out the reaction 1-octadecanoyl-2-(4Z,7Z,10Z,13Z,16Z,19Z-docosahexaenoyl)-sn-glycero-3-phosphoethanolamine + L-serine = 1-octadecanoyl-2-(4Z,7Z,10Z,13Z,16Z,19Z-docosahexaenoyl)-sn-glycero-3-phosphoserine + ethanolamine. The enzyme catalyses 1-(1Z-octadecenyl)-2-(4Z,7Z,10Z,13Z,16Z,19Z-docosahexaenoyl)-sn-glycero-3-phosphoethanolamine + L-serine = 1-(1Z-octadecenyl)-2-(4Z,7Z,10Z,13Z,16Z,19Z-docosahexaenoyl)-sn-glycero-3-phospho-L-serine + ethanolamine. The catalysed reaction is 1-octadecanoyl-2-(9Z-octadecenoyl)-sn-glycero-3-phosphoethanolamine + L-serine = 1-octadecanoyl-2-(9Z-octadecenoyl)-sn-glycero-3-phospho-L-serine + ethanolamine. It catalyses the reaction 1-(1Z-octadecenyl)-2-(9Z-octadecenoyl)-sn-glycero-3-phosphoethanolamine + L-serine = 1-(1Z-octadecenyl)-2-(9Z-octadecenoyl)-sn-glycero-3-phospho-L-serine + ethanolamine. It carries out the reaction 1-(1Z-octadecenyl)-2-(5Z,8Z,11Z,14Z- eicosatetraenoyl)-sn-glycero-3-phosphoethanolamine + L-serine = 1-(1Z-octadecenyl)-2-(5Z,8Z,11Z,14Z-eicosatetraenoyl)-sn-glycero-3-phospho-L-serine + ethanolamine. It functions in the pathway phospholipid metabolism; phosphatidylserine biosynthesis. Catalyzes a base-exchange reaction in which the polar head group of phosphatidylethanolamine (PE) or phosphatidylcholine (PC) is replaced by L-serine. Catalyzes the conversion of phosphatatidylethanolamine and does not act on phosphatidylcholine. Can utilize both phosphatidylethanolamine (PE) plasmalogen and diacyl PE as substrate and the latter is six times better utilized, indicating the importance of an ester linkage at the sn-1 position. Although it shows no sn-1 fatty acyl preference, exhibits significant preference towards docosahexaenoic acid (22:6n-3) compared with 18:1 or 20:4 at the sn-2 position. This Danio rerio (Zebrafish) protein is Phosphatidylserine synthase 2 (ptdss2).